Reading from the N-terminus, the 208-residue chain is N-(5'-phosphoribosyl)anthranilate isomerase (208 aa).

Belongs to the TrpF family.

It carries out the reaction N-(5-phospho-beta-D-ribosyl)anthranilate = 1-(2-carboxyphenylamino)-1-deoxy-D-ribulose 5-phosphate. It participates in amino-acid biosynthesis; L-tryptophan biosynthesis; L-tryptophan from chorismate: step 3/5. The sequence is that of N-(5'-phosphoribosyl)anthranilate isomerase from Chlamydia trachomatis serovar L2 (strain ATCC VR-902B / DSM 19102 / 434/Bu).